The sequence spans 235 residues: C-&gt;U-editing enzyme APOBEC-1 (235 aa).

In terms of domain architecture, CMP/dCMP-type deaminase spans 10 to 131 (GDATLRRRIK…MDQQHRQGLK (122 aa)). His-60 lines the Zn(2+) pocket. Glu-62 functions as the Proton donor in the catalytic mechanism. Zn(2+) contacts are provided by Cys-92 and Cys-95.

The protein belongs to the cytidine and deoxycytidylate deaminase family. As to quaternary structure, homodimer. Interacts with A1CF; form an mRNA editing complex. Interacts with RBM47; form an mRNA editing complex. Found in a complex with CELF2/CUGBP2 and A1CF. Interacts with HNRPAB. Interacts with SYNCRIP. It depends on Zn(2+) as a cofactor.

Its subcellular location is the cytoplasm. The protein localises to the nucleus. The enzyme catalyses a cytidine in mRNA + H2O + H(+) = a uridine in mRNA + NH4(+). It carries out the reaction cytidine(6666) in apoB mRNA + H2O + H(+) = uridine(6666) in apoB mRNA + NH4(+). Cytidine deaminase catalyzing the cytidine to uridine postranscriptional editing of a variety of mRNAs. Form complexes with cofactors that confer differential editing activity and selectivity. Responsible for the postranscriptional editing of a CAA codon for Gln to a UAA codon for stop in the apolipoprotein B mRNA. Also involved in CGA (Arg) to UGA (Stop) editing in the NF1 mRNA. May also play a role in the epigenetic regulation of gene expression by participating in DNA demethylation. The polypeptide is C-&gt;U-editing enzyme APOBEC-1 (Monodelphis domestica (Gray short-tailed opossum)).